A 283-amino-acid polypeptide reads, in one-letter code: 4-diphosphocytidyl-2-C-methyl-D-erythritol kinase (283 aa).

Residue K10 is part of the active site. An ATP-binding site is contributed by 99–109 (PMGGGLGGGSS). The active site involves D141.

This sequence belongs to the GHMP kinase family. IspE subfamily. Homodimer.

The catalysed reaction is 4-CDP-2-C-methyl-D-erythritol + ATP = 4-CDP-2-C-methyl-D-erythritol 2-phosphate + ADP + H(+). It participates in isoprenoid biosynthesis; isopentenyl diphosphate biosynthesis via DXP pathway; isopentenyl diphosphate from 1-deoxy-D-xylulose 5-phosphate: step 3/6. In terms of biological role, catalyzes the phosphorylation of the position 2 hydroxy group of 4-diphosphocytidyl-2C-methyl-D-erythritol. This chain is 4-diphosphocytidyl-2-C-methyl-D-erythritol kinase, found in Salmonella paratyphi C (strain RKS4594).